The chain runs to 426 residues: Gamma-glutamyl phosphate reductase (426 aa).

This sequence belongs to the gamma-glutamyl phosphate reductase family.

The protein resides in the cytoplasm. It carries out the reaction L-glutamate 5-semialdehyde + phosphate + NADP(+) = L-glutamyl 5-phosphate + NADPH + H(+). It participates in amino-acid biosynthesis; L-proline biosynthesis; L-glutamate 5-semialdehyde from L-glutamate: step 2/2. Functionally, catalyzes the NADPH-dependent reduction of L-glutamate 5-phosphate into L-glutamate 5-semialdehyde and phosphate. The product spontaneously undergoes cyclization to form 1-pyrroline-5-carboxylate. This Deinococcus geothermalis (strain DSM 11300 / CIP 105573 / AG-3a) protein is Gamma-glutamyl phosphate reductase.